Consider the following 585-residue polypeptide: ATP-dependent lipid A-core flippase (585 aa).

A run of 5 helical transmembrane segments spans residues 16 to 36 (LWPY…ALII), 66 to 86 (FLSM…ASGF), 156 to 176 (IIGL…ILLV), 252 to 272 (AIAN…VLVL), and 278 to 298 (LRAE…FGLM). Positions 29–313 (VAVVALIINA…LTNVTSQFQR (285 aa)) constitute an ABC transmembrane type-1 domain. Residues 345–581 (IQVKNVTFTY…DGAYAQLHRI (237 aa)) form the ABC transporter domain. Position 379-386 (379-386 (GRSGSGKS)) interacts with ATP.

Belongs to the ABC transporter superfamily. Lipid exporter (TC 3.A.1.106) family. As to quaternary structure, homodimer.

The protein localises to the cell inner membrane. The catalysed reaction is ATP + H2O + lipid A-core oligosaccharideSide 1 = ADP + phosphate + lipid A-core oligosaccharideSide 2.. Its function is as follows. Involved in lipopolysaccharide (LPS) biosynthesis. Translocates lipid A-core from the inner to the outer leaflet of the inner membrane. Transmembrane domains (TMD) form a pore in the inner membrane and the ATP-binding domain (NBD) is responsible for energy generation. The chain is ATP-dependent lipid A-core flippase from Photobacterium profundum (strain SS9).